We begin with the raw amino-acid sequence, 193 residues long: dCTP deaminase (193 aa).

DCTP is bound by residues 110–115 (RSSLAR), Asp-128, 136–138 (VLE), Tyr-171, Lys-178, and Gln-182. Catalysis depends on Glu-138, which acts as the Proton donor/acceptor.

This sequence belongs to the dCTP deaminase family. Homotrimer.

The enzyme catalyses dCTP + H2O + H(+) = dUTP + NH4(+). It participates in pyrimidine metabolism; dUMP biosynthesis; dUMP from dCTP (dUTP route): step 1/2. Its function is as follows. Catalyzes the deamination of dCTP to dUTP. The protein is dCTP deaminase of Aeromonas salmonicida (strain A449).